A 591-amino-acid polypeptide reads, in one-letter code: Aspartate--tRNA(Asp/Asn) ligase (591 aa).

L-aspartate is bound at residue glutamate 175. Residues 199–202 (QQYK) are aspartate. 2 residues coordinate L-aspartate: arginine 221 and histidine 450. 221–223 (RDE) is a binding site for ATP. Glutamate 484 serves as a coordination point for ATP. Arginine 491 serves as a coordination point for L-aspartate. 536-539 (GVDR) contacts ATP.

Belongs to the class-II aminoacyl-tRNA synthetase family. Type 1 subfamily. In terms of assembly, homodimer.

The protein resides in the cytoplasm. The enzyme catalyses tRNA(Asx) + L-aspartate + ATP = L-aspartyl-tRNA(Asx) + AMP + diphosphate. Aspartyl-tRNA synthetase with relaxed tRNA specificity since it is able to aspartylate not only its cognate tRNA(Asp) but also tRNA(Asn). Reaction proceeds in two steps: L-aspartate is first activated by ATP to form Asp-AMP and then transferred to the acceptor end of tRNA(Asp/Asn). In Rhodopseudomonas palustris (strain TIE-1), this protein is Aspartate--tRNA(Asp/Asn) ligase.